Reading from the N-terminus, the 92-residue chain is MVRSVWKGPFVDGYLLGKAEKVRSSGRNEVIKIWSRRSTILPQFVGLTFGVHNGNKHIPVSVSEEMVGHKFGEFAPTRTYYGHGADKKAKRK.

This sequence belongs to the universal ribosomal protein uS19 family.

Protein S19 forms a complex with S13 that binds strongly to the 16S ribosomal RNA. This Bartonella quintana (strain Toulouse) (Rochalimaea quintana) protein is Small ribosomal subunit protein uS19.